Reading from the N-terminus, the 365-residue chain is 3-isopropylmalate dehydrogenase (365 aa).

80–91 (GPKWGTGEVRPE) is a binding site for NAD(+). Positions 98, 108, 137, and 226 each coordinate substrate. Mg(2+)-binding residues include aspartate 226, aspartate 251, and aspartate 255. Position 290 to 301 (290 to 301 (GSAPDLPKNKVN)) interacts with NAD(+).

The protein belongs to the isocitrate and isopropylmalate dehydrogenases family. Homodimer. Mg(2+) serves as cofactor. Mn(2+) is required as a cofactor.

It localises to the cytoplasm. It carries out the reaction (2R,3S)-3-isopropylmalate + NAD(+) = 4-methyl-2-oxopentanoate + CO2 + NADH. The protein operates within amino-acid biosynthesis; L-leucine biosynthesis; L-leucine from 3-methyl-2-oxobutanoate: step 3/4. Catalyzes the oxidation of 3-carboxy-2-hydroxy-4-methylpentanoate (3-isopropylmalate) to 3-carboxy-4-methyl-2-oxopentanoate. The product decarboxylates to 4-methyl-2 oxopentanoate. In Candida boidinii (Yeast), this protein is 3-isopropylmalate dehydrogenase (LEU2).